The chain runs to 150 residues: UPF0178 protein Bcen2424_1660 (150 aa).

This sequence belongs to the UPF0178 family.

This is UPF0178 protein Bcen2424_1660 from Burkholderia cenocepacia (strain HI2424).